Here is a 333-residue protein sequence, read N- to C-terminus: Probable siderophore transport system permease protein YfiZ (333 aa).

Positions 1 to 31 (MICKKASSKWIVLVCLIFILLTAVCASVVYG) are cleaved as a signal peptide. 8 helical membrane passes run 64-84 (ALVATVVGASLAAAGALMQAL), 94-114 (IFGINAGAGFFIVAGSFFLHI), 119-139 (ALVWSSFLGAAFTAAIVYAAG), 152-172 (TLAGAAMAAMFSSLTQGLLSV), 193-213 (LDLLMTMFPYAAAALVICFFL), 246-266 (VMLAGSAVAIAGPISFIGIII), 280-300 (WVLPFSAVLGAILLVCADIGA), and 303-323 (IIMPQEVPVGVMTAIIGMPVF).

It belongs to the binding-protein-dependent transport system permease family. FecCD subfamily. The complex is composed of one ATP-binding protein (YusV), two transmembrane proteins (YfiZ and YfhA) and a solute-binding protein (YfiY).

The protein localises to the cell membrane. Functionally, part of the ABC transporter complex YfiYZ/YfhA/YusV involved in import of the iron-hydroxamate siderophores schizokinen, arthrobactin and corprogen. The polypeptide is Probable siderophore transport system permease protein YfiZ (yfiZ) (Bacillus subtilis (strain 168)).